Here is a 495-residue protein sequence, read N- to C-terminus: Probable cobyric acid synthase (495 aa).

The GATase cobBQ-type domain maps to 256–441 (DVDIAVIRLT…LHGLFDNVNI (186 aa)). The Nucleophile role is filled by Cys-334. Residue His-433 is part of the active site.

The protein belongs to the CobB/CobQ family. CobQ subfamily.

It participates in cofactor biosynthesis; adenosylcobalamin biosynthesis. Catalyzes amidations at positions B, D, E, and G on adenosylcobyrinic A,C-diamide. NH(2) groups are provided by glutamine, and one molecule of ATP is hydrogenolyzed for each amidation. The polypeptide is Probable cobyric acid synthase (Methanococcoides burtonii (strain DSM 6242 / NBRC 107633 / OCM 468 / ACE-M)).